The following is a 224-amino-acid chain: Cytidylate kinase (224 aa).

9 to 17 (GPSGSGKGT) serves as a coordination point for ATP.

It belongs to the cytidylate kinase family. Type 1 subfamily.

It localises to the cytoplasm. The enzyme catalyses CMP + ATP = CDP + ADP. The catalysed reaction is dCMP + ATP = dCDP + ADP. This chain is Cytidylate kinase, found in Saccharophagus degradans (strain 2-40 / ATCC 43961 / DSM 17024).